Consider the following 474-residue polypeptide: MSEKFSPTLRLGDLNDFIAPSQACVISLKDSKPIVKKSDRPQVVIAPKQQLEPVKISLKDCLACSGCITSAETVMLEKQSLDEFLSALSKGKDVVVSVSPQSRASLAVHYDISPLQVFKKLTTFLKSLGVKAVFDTSCSRDLVLIESCNEFVSRYKQANSDDGENSQSPLPVLSSACPGWICYAEKQLGSYVLPYVSSVKSPQQAIGAAIKHHLCQALGLRLHEVYHVTVMPCYDKKLEAARDDFVFDDGTQDNGDLKLTEVDSVLTTGEIMDLIKLKGVDFKDLEESPLDRVLTNVTEEGDLYGVAGSSGGYAETIFRHAAKALFGQTIEGPLEFKTLRNSDFREVTLQLEGKTVLKFALCYGFQNLQNIVRRVKTRKCDYQYVEIMACPAGCLNGGGQIKPKTGQSQKELIHSLEATYMNDTTLNTDPYQNPTAKRLFEEWLKEPGSNEAKKYLHTQYHPVVKSVTSQLNNW.

Cys24, Cys61, Cys64, Cys67, Cys177, Cys233, Cys390, and Cys394 together coordinate [4Fe-4S] cluster.

The protein belongs to the NARF family. In terms of assembly, part of a complex composed of AE7, CIA1, MMS19 and NAR1. Interacts with CIA1. Expressed in developing tissues, including shoot apex, young leaves, vascular tissues, root tips, pedicels, carpels and developing seeds.

The protein localises to the nucleus. The protein resides in the cytoplasm. Functionally, essential component of the cytosolic iron-sulfur (Fe-S) protein assembly (CIA) machinery. Required for the maturation of extramitochondrial Fe/S proteins. Required for expression of the imprinted FWA gene, for seed development and is involved in the oxidative stress response in vegetative tissues. Involved in the regulation of cell size, ploidy and cell cycle progression. Required for growth under normoxic conditions and necessary for recovery after hypoxic treatment but its action is reactive oxygen species (ROS) independent. This is Protein NAR1 from Arabidopsis thaliana (Mouse-ear cress).